Reading from the N-terminus, the 89-residue chain is Large ribosomal subunit protein bL31B (89 aa).

The protein belongs to the bacterial ribosomal protein bL31 family. Type B subfamily. As to quaternary structure, part of the 50S ribosomal subunit.

In Aeromonas hydrophila subsp. hydrophila (strain ATCC 7966 / DSM 30187 / BCRC 13018 / CCUG 14551 / JCM 1027 / KCTC 2358 / NCIMB 9240 / NCTC 8049), this protein is Large ribosomal subunit protein bL31B.